The following is a 447-amino-acid chain: Retinoic acid receptor alpha (447 aa).

The tract at residues 1–79 is modulating; the sequence is MAGKGNPVPG…PPPPPRVYKP (79 aa). The segment covering 47-61 has biased composition (polar residues); sequence TPSPATIETQSTSSE. Residues 47-72 form a disordered region; that stretch reads TPSPATIETQSTSSEEIVPSPPSPPP. NR C4-type zinc fingers lie at residues 80–100 and 116–140; these read CFVCQDKSSGYHYGVSACEGC and CHREKNCIINKVTRNRCQYCRLQKC. A DNA-binding region (nuclear receptor) is located at residues 80–145; sequence CFVCQDKSSG…RLQKCLEVGM (66 aa). A hinge region spans residues 146 to 174; that stretch reads SKESVRNDRNKKKKDEKKPECIENYVLSP. The NR LBD domain occupies 175–409; sequence DTEQMINRVR…PLIQEMLENS (235 aa). The 9aaTAD motif lies at 400–408; it reads PLIQEMLEN. The tract at residues 407–447 is disordered; it reads ENSEGLESGATGSRPSGAPPGSCSPSLSPSSAQSSPPTQSP. Positions 414–447 are enriched in low complexity; the sequence is SGATGSRPSGAPPGSCSPSLSPSSAQSSPPTQSP.

The protein belongs to the nuclear hormone receptor family. NR1 subfamily. In terms of assembly, heterodimer; with an rxr molecule. Binds DNA preferentially as a rar/rxr heterodimer.

Its subcellular location is the nucleus. Receptor for retinoic acid. Retinoic acid receptors bind as heterodimers to their target response elements in response to their ligands, all-trans or 9-cis retinoic acid, and regulate gene expression in various biological processes. The rar/rxr heterodimers bind to the retinoic acid response elements (RARE) composed of tandem 5'-AGGTCA-3' sites known as DR1-DR5. The polypeptide is Retinoic acid receptor alpha (rara) (Takifugu rubripes (Japanese pufferfish)).